The chain runs to 69 residues: UPF0346 protein YuiB (69 aa).

The protein belongs to the UPF0346 family.

This chain is UPF0346 protein YuiB (yuiB), found in Lactococcus lactis subsp. lactis (strain IL1403) (Streptococcus lactis).